The following is a 104-amino-acid chain: Transcription factor ILI1 (104 aa).

Basic residues predominate over residues 1–11 (MSSSRRSRSRR). A disordered region spans residues 1–27 (MSSSRRSRSRRAGSSVPSSSSSSRTSI). The segment covering 12-27 (AGSSVPSSSSSSRTSI) has biased composition (low complexity). In terms of domain architecture, bHLH spans 16 to 71 (VPSSSSSSRTSISEDQIAELLSKLQALLPESQARNGAHRGSAARVLQETCSYIRSL).

Belongs to the bHLH protein family. As to quaternary structure, interacts with IBH1.

Atypical and probable non DNA-binding bHLH transcription factor that acts as a positive regulator of cell elongation and plant development. Binds the transcription repressor IBH1 and forms a heterodimer of antagonistic bHLH transcription factors that function downstream of BZR1 to mediate brassinosteroid regulation of cell elongation and lamina inclination. This Oryza sativa subsp. indica (Rice) protein is Transcription factor ILI1 (ILI1).